Consider the following 133-residue polypeptide: MSQDFSREKRLLTPRHFKAVFDSPTGKVPGKNLLILARENGLDHPRLGLVIGKKSVKLAVQRNRLKRLMRDSFRLNQQLLAGLDIVIVARKGLGEIENPELHQHFGKLWKRLARSRPTPAVTANSAGVDSQDA.

This sequence belongs to the RnpA family. In terms of assembly, consists of a catalytic RNA component (M1 or rnpB) and a protein subunit.

The enzyme catalyses Endonucleolytic cleavage of RNA, removing 5'-extranucleotides from tRNA precursor.. Its function is as follows. RNaseP catalyzes the removal of the 5'-leader sequence from pre-tRNA to produce the mature 5'-terminus. It can also cleave other RNA substrates such as 4.5S RNA. The protein component plays an auxiliary but essential role in vivo by binding to the 5'-leader sequence and broadening the substrate specificity of the ribozyme. The sequence is that of Ribonuclease P protein component from Pseudomonas putida (strain ATCC 47054 / DSM 6125 / CFBP 8728 / NCIMB 11950 / KT2440).